We begin with the raw amino-acid sequence, 279 residues long: Alcohol dehydrogenase-related 31 kDa protein (279 aa).

Tyr11–Leu34 is an NAD(+) binding site. A substrate-binding site is contributed by Ser139. The active-site Proton acceptor is Tyr152.

Belongs to the short-chain dehydrogenases/reductases (SDR) family.

The polypeptide is Alcohol dehydrogenase-related 31 kDa protein (Adhr) (Drosophila subobscura (Fruit fly)).